The chain runs to 275 residues: Release factor glutamine methyltransferase (275 aa).

S-adenosyl-L-methionine contacts are provided by residues 114 to 118 (GTGSG), Asp137, Trp165, and Asn180. A substrate-binding site is contributed by 180–183 (NPPY).

It belongs to the protein N5-glutamine methyltransferase family. PrmC subfamily.

The enzyme catalyses L-glutaminyl-[peptide chain release factor] + S-adenosyl-L-methionine = N(5)-methyl-L-glutaminyl-[peptide chain release factor] + S-adenosyl-L-homocysteine + H(+). In terms of biological role, methylates the class 1 translation termination release factors RF1/PrfA and RF2/PrfB on the glutamine residue of the universally conserved GGQ motif. This chain is Release factor glutamine methyltransferase, found in Xylella fastidiosa (strain Temecula1 / ATCC 700964).